Here is a 582-residue protein sequence, read N- to C-terminus: Vesicular glutamate transporter 2 (582 aa).

At 1–71 (MESVKQRILA…CTCFGLPRRY (71 aa)) the chain is on the cytoplasmic side. The chain crosses the membrane as a helical span at residues 72-92 (IIAIMSGLGFCISFGIRCNLG). Residues 93–125 (VAIVDMVNNSTIHRGGKVIKEKAKFNWDPETVG) lie on the Vesicular side of the membrane. N-linked (GlcNAc...) asparagine glycans are attached at residues Asn-100 and Asn-101. The helical transmembrane segment at 126–146 (MIHGSFFWGYIITQIPGGYIA) threads the bilayer. Over 147–148 (SR) the chain is Cytoplasmic. A helical membrane pass occupies residues 149–169 (LAANRVFGAAILLTSTLNMLI). At 170-177 (PSAARVHY) the chain is on the vesicular side. A helical membrane pass occupies residues 178 to 198 (GCVIFVRILQGLVEGVTYPAC). The Cytoplasmic portion of the chain corresponds to 199-216 (HGIWSKWAPPLERSRLAT). Residues 217-237 (TSFCGSYAGAVIAMPLAGILV) form a helical membrane-spanning segment. The Vesicular segment spans residues 238 to 244 (QYTGWSS). Residues 245–265 (VFYVYGSFGMVWYMFWLLVSY) form a helical membrane-spanning segment. Residues 266–310 (ESPAKHPTITDEERRYIEESIGESANLLGAMEKFKTPWRKFFTSM) lie on the Cytoplasmic side of the membrane. Residues 311–331 (PVYAIIVANFCRSWTFYLLLI) traverse the membrane as a helical segment. Over 332–349 (SQPAYFEEVFGFEISKVG) the chain is Vesicular. A helical transmembrane segment spans residues 350–370 (MLSAVPHLVMTIIVPIGGQIA). Over 371-386 (DFLRSKQILSTTTVRK) the chain is Cytoplasmic. Residues 387–407 (IMNCGGFGMEATLLLVVGYSH) form a helical membrane-spanning segment. The Vesicular segment spans residues 408–409 (TR). The chain crosses the membrane as a helical span at residues 410-430 (GVAISFLVLAVGFSGFAISGF). Over 431-443 (NVNHLDIAPRYAS) the chain is Cytoplasmic. Residues 444-464 (ILMGISDGVGTLSGMVCPIIV) traverse the membrane as a helical segment. Topologically, residues 465–477 (GAMTKNKSREEWQ) are vesicular. Asn-470 carries N-linked (GlcNAc...) asparagine glycosylation. Residues 478 to 498 (YVFLIAALVHYGGVIFYALFA) traverse the membrane as a helical segment. The Cytoplasmic portion of the chain corresponds to 499-582 (SGEKQPWADP…YTYKDRDDYS (84 aa)).

The protein belongs to the major facilitator superfamily. Sodium/anion cotransporter family. VGLUT subfamily. In terms of tissue distribution, expressed in brain. Expressed in hippocampal neurons (at protein level).

The protein localises to the cytoplasmic vesicle. It is found in the secretory vesicle. It localises to the synaptic vesicle membrane. The protein resides in the synapse. Its subcellular location is the synaptosome. The protein localises to the cell membrane. The catalysed reaction is L-glutamate(out) = L-glutamate(in). It carries out the reaction K(+)(in) + H(+)(out) = K(+)(out) + H(+)(in). The enzyme catalyses 3 Na(+)(out) + phosphate(out) = 3 Na(+)(in) + phosphate(in). It catalyses the reaction phosphate(in) = phosphate(out). The catalysed reaction is chloride(in) = chloride(out). Its activity is regulated as follows. Chloride channel activity is allosterically activated by lumenal H(+) and Cl(-) leading to synaptic vesicles acidification. The L-glutamate transport activity is allosterically activated by lumenal H(+) and Cl(-). The allosteric requirement for H(+) efficiently prevents non-vesicular efflux across the plasma membrane. The L-glutamate uniporter activity exhibits a biphasic dependence on chloride concentration. Functionally, multifunctional transporter that transports L-glutamate as well as multiple ions such as chloride, proton, potassium, sodium and phosphate. At the synaptic vesicle membrane, mainly functions as a uniporter which transports preferentially L-glutamate but also, phosphate from the cytoplasm into synaptic vesicles at presynaptic nerve terminals of excitatory neural cells. The L-glutamate or phosphate uniporter activity is electrogenic and is driven by the proton electrochemical gradient, mainly by the electrical gradient established by the vacuolar H(+)-ATPase across the synaptic vesicle membrane. In addition, functions as a chloride channel that allows a chloride permeation through the synaptic vesicle membrane therefore affects the proton electrochemical gradient and promotes synaptic vesicles acidification. Moreover, functions as a vesicular K(+)/H(+) antiport allowing to maintain the electrical gradient and to decrease chemical gradient and therefore sustain vesicular glutamate uptake. The vesicular H(+)/H(+) antiport activity is electroneutral. At the plasma membrane, following exocytosis, functions as a symporter of Na(+) and phosphate from the extracellular space to the cytoplasm allowing synaptic phosphate homeostasis regulation. The symporter activity is driven by an inside negative membrane potential and is electrogenic. Also involved in the regulation of retinal hyaloid vessel regression during postnatal development. May also play a role in the endocrine glutamatergic system of other tissues such as pineal gland and pancreas. In Mus musculus (Mouse), this protein is Vesicular glutamate transporter 2.